Here is a 399-residue protein sequence, read N- to C-terminus: CCA-adding enzyme (399 aa).

Residues Gly-32 and Arg-35 each coordinate ATP. Gly-32 and Arg-35 together coordinate CTP. Residues Asp-45 and Asp-47 each coordinate Mg(2+). The ATP site is built by Arg-116, Asp-159, Arg-162, Arg-165, and Arg-168. 5 residues coordinate CTP: Arg-116, Asp-159, Arg-162, Arg-165, and Arg-168.

Belongs to the tRNA nucleotidyltransferase/poly(A) polymerase family. Bacterial CCA-adding enzyme type 3 subfamily. In terms of assembly, homodimer. Requires Mg(2+) as cofactor.

It catalyses the reaction a tRNA precursor + 2 CTP + ATP = a tRNA with a 3' CCA end + 3 diphosphate. The enzyme catalyses a tRNA with a 3' CCA end + 2 CTP + ATP = a tRNA with a 3' CCACCA end + 3 diphosphate. Functionally, catalyzes the addition and repair of the essential 3'-terminal CCA sequence in tRNAs without using a nucleic acid template. Adds these three nucleotides in the order of C, C, and A to the tRNA nucleotide-73, using CTP and ATP as substrates and producing inorganic pyrophosphate. tRNA 3'-terminal CCA addition is required both for tRNA processing and repair. Also involved in tRNA surveillance by mediating tandem CCA addition to generate a CCACCA at the 3' terminus of unstable tRNAs. While stable tRNAs receive only 3'-terminal CCA, unstable tRNAs are marked with CCACCA and rapidly degraded. This is CCA-adding enzyme from Streptococcus pneumoniae (strain CGSP14).